A 65-amino-acid polypeptide reads, in one-letter code: MGMRMMFTMFLLVVLATTVVSFASDRASDGRNAAAKDKASDLVALTVKGCCSHPACSVNNPDICG.

The signal sequence occupies residues 1–21; the sequence is MGMRMMFTMFLLVVLATTVVS. Positions 22–48 are excised as a propeptide; it reads FASDRASDGRNAAAKDKASDLVALTVK. 2 disulfide bridges follow: Cys50–Cys56 and Cys51–Cys64. Residues 52-54 form a ser-Xaa-Pro motif, crucial for potent interaction with nAChR region; that stretch reads SHP. Cys64 carries the post-translational modification Cysteine amide.

This sequence belongs to the conotoxin A superfamily. As to expression, expressed by the venom duct.

The protein localises to the secreted. Its function is as follows. Alpha-conotoxins act on postsynaptic membranes, they bind to the nicotinic acetylcholine receptors (nAChR) and thus inhibit them. This toxin inhibits acetylcholine-evoked currents reversibly in oocytes expressing the human alpha-7/CHRNA7 nAChR, and blocks nerve-evoked skeletal muscle contractions in isolated mouse neuromuscular preparations, but with a very low affinity. In Conus bandanus (Banded marble cone), this protein is Alpha-conotoxin BnIA.